The chain runs to 279 residues: Ribosomal RNA small subunit methyltransferase J (279 aa).

S-adenosyl-L-methionine-binding positions include 138–139 (ER) and Asp-194.

The protein belongs to the methyltransferase superfamily. RsmJ family.

The protein localises to the cytoplasm. The enzyme catalyses guanosine(1516) in 16S rRNA + S-adenosyl-L-methionine = N(2)-methylguanosine(1516) in 16S rRNA + S-adenosyl-L-homocysteine + H(+). Specifically methylates the guanosine in position 1516 of 16S rRNA. The chain is Ribosomal RNA small subunit methyltransferase J from Acinetobacter baumannii (strain ATCC 17978 / DSM 105126 / CIP 53.77 / LMG 1025 / NCDC KC755 / 5377).